Consider the following 73-residue polypeptide: Defensin-like protein 87 (73 aa).

Positions 1 to 27 are cleaved as a signal peptide; the sequence is MTTKKTSSVVLPLLLVFALILMPMVAG. Intrachain disulfides connect Cys33/Cys71, Cys45/Cys69, and Cys49/Cys70.

The protein belongs to the DEFL family.

The protein resides in the secreted. The sequence is that of Defensin-like protein 87 from Arabidopsis thaliana (Mouse-ear cress).